A 713-amino-acid polypeptide reads, in one-letter code: Major surface-labeled trophozoite antigen 417 (713 aa).

An N-terminal signal peptide occupies residues 1–17; that stretch reads MFGRFLLAIVILQLART. Residues 18–679 lie on the Extracellular side of the membrane; that stretch reads ACTQEADDGK…KDSGSTNKSG (662 aa). N-linked (GlcNAc...) asparagine glycans are attached at residues asparagine 289 and asparagine 676. A helical membrane pass occupies residues 680 to 708; sequence LSTGAIAGISVAVIVVVGGLIGFLCWWFL. The Cytoplasmic portion of the chain corresponds to 709-713; sequence CRGKA.

Belongs to the Giardia variant surface protein family.

The protein resides in the cell membrane. In Giardia intestinalis (Giardia lamblia), this protein is Major surface-labeled trophozoite antigen 417 (TSA 417).